Reading from the N-terminus, the 285-residue chain is NADH-dependent oxidoreductase ucdB (285 aa).

T87 contacts NAD(+). K156 is a catalytic residue.

The protein belongs to the HIBADH-related family. NP60 subfamily.

Its pathway is secondary metabolite biosynthesis. In terms of biological role, nonribosomal peptide synthetase that mediates the biosynthesis of usterphenyllins and uscandidusins, p-terphenyl derivatives. Within the pathway, ucdB alone catalyzes both reduction and dehydration of atromentin to form a terphenyl triol intermediate. The pathway begin with the biosynthesis of 4-hydroxyphenylpyruvate (HPPA) from L-tyrosine, possibly by the aminotransferase ucdG. The nonribosomal peptide synthetase ucdA then condenses two HPPA units to produce atromentin. The key step in this pathway is the reduction and dehydration of atromentin to form a terphenyl triol intermediate, performed by the NAD-dependent dehydrogenase ucdB. Further O-methylation by the methyltransferase ucdC forms terphenyllin carrying two methoxy moieties at C-9 and C-12, and subsequent dihydroxylation at C-3 of ring A and C-15 of ring C by the flavin-dependent oxygenase ucdD leads to 3,15-dihydroxyterphenyllin. Prenylation by ucdE at position C-5 of ring A forms usterphenyllin B, and is followed by a second prenylation at position C-14 of ring C to form usterphenyllin A. The following furan ring formation that leads to uscandidusins A and B was proven to be an unexpected spontaneous non-enzymatic reaction. This is NADH-dependent oxidoreductase ucdB from Aspergillus ustus.